A 366-amino-acid polypeptide reads, in one-letter code: Methyltransferase phm5 (366 aa).

S-adenosyl-L-methionine contacts are provided by residues G204 to G205, D230, S255 to M256, R273, and R274.

The protein belongs to the class I-like SAM-binding methyltransferase superfamily. Cation-independent O-methyltransferase family.

Its pathway is secondary metabolite biosynthesis. In terms of biological role, methyltransferase; part of the gene cluster that mediates the biosynthesis of the trans-fused decalin-containing tetramic acid phomasetin, the stereochemical opposite of the HIV-1 integrase inhibitor equisetin. The PKS module of phm1 together with the enoylreductase phm4 catalyze the formation of the polyketide unit which is then conjugated to L-serine by the condensation domain of the phm1 NRPS module. Activity of the Dieckmann cyclase domain (RED) of phm1 results in release of the Dieckmann product intermediate. The Diels-Alderase phm7 then uses the Dieckmann product of phm1 as substrate and catalyzes the Diels-Alder cycloaddition to form the decalin ring of N-desmethylphomasetin. N-desmethylphomasetin is further methylated to phomasetin by the methyltransferase phm5. This Pyrenochaetopsis sp protein is Methyltransferase phm5.